Reading from the N-terminus, the 527-residue chain is Peptide chain release factor 3 (527 aa).

The tr-type G domain maps to 9–277 (AKRRTFAIIS…AVVDWAPRPL (269 aa)). Residues 18–25 (SHPDAGKT), 86–90 (DTPGH), and 140–143 (NKLD) each bind GTP.

Belongs to the TRAFAC class translation factor GTPase superfamily. Classic translation factor GTPase family. PrfC subfamily.

The protein localises to the cytoplasm. Increases the formation of ribosomal termination complexes and stimulates activities of RF-1 and RF-2. It binds guanine nucleotides and has strong preference for UGA stop codons. It may interact directly with the ribosome. The stimulation of RF-1 and RF-2 is significantly reduced by GTP and GDP, but not by GMP. This Pseudomonas entomophila (strain L48) protein is Peptide chain release factor 3.